The sequence spans 206 residues: Insecticyanin-B (206 aa).

The signal sequence occupies residues 1 to 17 (MQRFLVFTIVAVATAAA). 2 disulfide bridges follow: C26–C136 and C60–C192.

It belongs to the calycin superfamily. Lipocalin family. Homotetramer. As to expression, synthesized only in the caterpillars, apparently by the epidermis and secreted into the hemolymph. The protein is passed over from the larval hemolymph to that of pupae and adults and is sequestered in the eggs.

Its subcellular location is the secreted. In terms of biological role, this protein binds a chromophore: biliverdin IX, isomer gamma. Mixed with lipoprotein-bound carotenes, this blue protein provides hornworms with their green cryptic coloration which serves a camouflage. This is Insecticyanin-B (INSB) from Manduca sexta (Tobacco hawkmoth).